A 360-amino-acid chain; its full sequence is Peptide chain release factor 1 (360 aa).

Glutamine 237 is modified (N5-methylglutamine).

It belongs to the prokaryotic/mitochondrial release factor family. In terms of processing, methylated by PrmC. Methylation increases the termination efficiency of RF1.

The protein resides in the cytoplasm. Functionally, peptide chain release factor 1 directs the termination of translation in response to the peptide chain termination codons UAG and UAA. This Pseudomonas putida (strain ATCC 700007 / DSM 6899 / JCM 31910 / BCRC 17059 / LMG 24140 / F1) protein is Peptide chain release factor 1.